A 474-amino-acid chain; its full sequence is Histone H2B.v2 (474 aa).

3 disordered regions span residues 99 to 123 (FNNG…QNEL), 276 to 295 (TTFT…ISGD), and 328 to 394 (FNDN…VNNN). Low complexity-rich tracts occupy residues 100–110 (NNGGNNNNNNE), 276–286 (TTFTQQEQQEQ), and 329–368 (NDNN…NNKN).

The protein belongs to the histone H2B family.

This chain is Histone H2B.v2 (H2Bv2), found in Dictyostelium discoideum (Social amoeba).